Reading from the N-terminus, the 220-residue chain is NADH-quinone oxidoreductase subunit I (220 aa).

4Fe-4S ferredoxin-type domains are found at residues 71–102 (LQRLLDSGSERCIGCGLCEKICTSNCIRIITH) and 112–141 (DSYTINLGRCIYCGLCAEVCPELAIVMGNR). [4Fe-4S] cluster-binding residues include C82, C85, C88, C92, C121, C124, C127, and C131. The segment at 187–220 (MQATPLDYVQEPSKEESKEETPTNPESNKGDENV) is disordered. The segment covering 198 to 207 (PSKEESKEET) has biased composition (basic and acidic residues).

Belongs to the complex I 23 kDa subunit family. In terms of assembly, NDH-1 is composed of 14 different subunits. Subunits NuoA, H, J, K, L, M, N constitute the membrane sector of the complex. [4Fe-4S] cluster serves as cofactor.

It localises to the cell inner membrane. The enzyme catalyses a quinone + NADH + 5 H(+)(in) = a quinol + NAD(+) + 4 H(+)(out). Its function is as follows. NDH-1 shuttles electrons from NADH, via FMN and iron-sulfur (Fe-S) centers, to quinones in the respiratory chain. The immediate electron acceptor for the enzyme in this species is believed to be ubiquinone. Couples the redox reaction to proton translocation (for every two electrons transferred, four hydrogen ions are translocated across the cytoplasmic membrane), and thus conserves the redox energy in a proton gradient. In Helicobacter pylori (strain HPAG1), this protein is NADH-quinone oxidoreductase subunit I.